Reading from the N-terminus, the 584-residue chain is Protein spire homolog 1 (584 aa).

The interval 1–30 (MANTVEADGSNDEGYEAAEEGPEDEEDEKR) is disordered. In terms of domain architecture, KIND spans 1-73 (MANTVEADGS…RALFAETMEL (73 aa)). Positions 9 to 28 (GSNDEGYEAAEEGPEDEEDE) are enriched in acidic residues. Positions 71-99 (MELHTFLAKVKSAKENLKKIQEMEKSDES) form a coiled coil. 2 WH2 domains span residues 147-165 (PYEMLMDDIRCKRYTLRKV) and 211-228 (LHERILEEIKAERKLRPV). Over residues 224 to 238 (KLRPVSPEEIRRSRL) the composition is skewed to basic and acidic residues. A disordered region spans residues 224–366 (KLRPVSPEEI…PTNVRQFLPP (143 aa)). The residue at position 229 (Ser229) is a Phosphoserine. Polar residues predominate over residues 242-272 (TPESTKNLMESSMVNGGLTSQTKENGLSSAE). Ser292, Ser293, and Ser295 each carry phosphoserine. The span at 302–320 (KSTSSSSVSPSFPEEPVLE) shows a compositional bias: low complexity. Thr337 is modified (phosphothreonine). Basic and acidic residues predominate over residues 340 to 356 (PERRQPPQRRHSIEKET). Polar residues predominate over residues 357-366 (PTNVRQFLPP). Positions 384–404 (LALTVEEVMHIRQVLVKAELE) are spir-box. A phosphoserine mark is found at Ser506, Ser510, and Ser563.

This sequence belongs to the spire family. Interacts with FMN2.

The protein resides in the cytoplasm. Its subcellular location is the cytoskeleton. It localises to the cytosol. It is found in the cleavage furrow. The protein localises to the perinuclear region. The protein resides in the cell membrane. Its subcellular location is the cytoplasmic vesicle membrane. Acts as an actin nucleation factor, remains associated with the slow-growing pointed end of the new filament. Involved in intracellular vesicle transport along actin fibers, providing a novel link between actin cytoskeleton dynamics and intracellular transport. Required for asymmetric spindle positioning and asymmetric cell division during meiosis. Required for normal formation of the cleavage furrow and for polar body extrusion during female germ cell meiosis. Also acts in the nucleus: together with FMN2, promotes assembly of nuclear actin filaments in response to DNA damage in order to facilitate movement of chromatin and repair factors after DNA damage. In addition, promotes innate immune signaling downstream of dsRNA sensing. Mechanistically, contributes to IRF3 phosphorylation and activation downstream of MAVS and upstream of TBK1. The sequence is that of Protein spire homolog 1 (SPIRE1) from Macaca fascicularis (Crab-eating macaque).